Here is a 124-residue protein sequence, read N- to C-terminus: Small ribosomal subunit protein uS12 (124 aa).

Residue D89 is modified to 3-methylthioaspartic acid.

The protein belongs to the universal ribosomal protein uS12 family. As to quaternary structure, part of the 30S ribosomal subunit. Contacts proteins S8 and S17. May interact with IF1 in the 30S initiation complex.

In terms of biological role, with S4 and S5 plays an important role in translational accuracy. Interacts with and stabilizes bases of the 16S rRNA that are involved in tRNA selection in the A site and with the mRNA backbone. Located at the interface of the 30S and 50S subunits, it traverses the body of the 30S subunit contacting proteins on the other side and probably holding the rRNA structure together. The combined cluster of proteins S8, S12 and S17 appears to hold together the shoulder and platform of the 30S subunit. This chain is Small ribosomal subunit protein uS12, found in Shewanella frigidimarina (strain NCIMB 400).